Consider the following 364-residue polypeptide: Protein IncC (364 aa).

3 stretches are compositionally biased toward basic and acidic residues: residues 1–10 (MGVIHEETAY), 26–42 (ADHR…EATG), and 89–100 (HRPEVGSGRQEK). Disordered regions lie at residues 1–63 (MGVI…ASRV) and 75–102 (VRAG…EKTG).

It belongs to the ParA family.

Functionally, this is one of the proteins encoded by the trfB operon; it is involved in plasmid maintenance and replication. This Escherichia coli protein is Protein IncC (incC).